A 465-amino-acid polypeptide reads, in one-letter code: uncharacterized protein (465 aa).

The helical transmembrane segment at 56–76 (ILYMIIFAIFGLLPFLIALIF) threads the bilayer. The interval 177–198 (KFNKSKKSNKINDKTPILNNNN) is disordered. Residues 273-293 (LIFLLVSTILLIALIGFILII) form a helical membrane-spanning segment. A disordered region spans residues 411-449 (NNYNNSNNNNNSNNSNSNNNNNNNNNNNNYNNNNYNNNN).

Its subcellular location is the membrane. This is an uncharacterized protein from Dictyostelium discoideum (Social amoeba).